The following is a 428-amino-acid chain: Serine--tRNA ligase (428 aa).

235-237 (TAE) contacts L-serine. Residue 266–268 (RSE) participates in ATP binding. Glu289 lines the L-serine pocket. Residue 353–356 (EISS) participates in ATP binding. Ser389 is a binding site for L-serine.

The protein belongs to the class-II aminoacyl-tRNA synthetase family. Type-1 seryl-tRNA synthetase subfamily. In terms of assembly, homodimer. The tRNA molecule binds across the dimer.

Its subcellular location is the cytoplasm. The enzyme catalyses tRNA(Ser) + L-serine + ATP = L-seryl-tRNA(Ser) + AMP + diphosphate + H(+). It catalyses the reaction tRNA(Sec) + L-serine + ATP = L-seryl-tRNA(Sec) + AMP + diphosphate + H(+). Its pathway is aminoacyl-tRNA biosynthesis; selenocysteinyl-tRNA(Sec) biosynthesis; L-seryl-tRNA(Sec) from L-serine and tRNA(Sec): step 1/1. In terms of biological role, catalyzes the attachment of serine to tRNA(Ser). Is also able to aminoacylate tRNA(Sec) with serine, to form the misacylated tRNA L-seryl-tRNA(Sec), which will be further converted into selenocysteinyl-tRNA(Sec). This chain is Serine--tRNA ligase, found in Psychromonas ingrahamii (strain DSM 17664 / CCUG 51855 / 37).